Reading from the N-terminus, the 871-residue chain is Pentatricopeptide repeat-containing protein DOT4, chloroplastic (871 aa).

A chloroplast-targeting transit peptide spans 1 to 28 (MAMLVTNLSSSSFCFFSSPHLQNQKEIR). PPR repeat units lie at residues 60 to 94 (SVTD…DIDP), 96 to 127 (TLCS…GFVI), 128 to 158 (DSNL…VKIE), 159 to 193 (KALF…GVEM), 194 to 228 (DSYT…GFGE), 229 to 259 (RNSV…MTER), 260 to 294 (DVIS…GIEI), 295 to 329 (DLAT…CFSR), 330 to 360 (EDRF…MSDR), 361 to 395 (SVVS…GISP), 396 to 430 (DVYT…DLGF), 431 to 465 (DIFV…DIIS), 466 to 497 (WNTI…RFSP), 498 to 532 (DERT…GYFS), 533 to 563 (DRHV…IASK), 564 to 598 (DLVS…GIEA), 599 to 629 (DEIS…MRHE), and 635 to 665 (TVEH…MPIP). The type E motif stretch occupies residues 670-745 (IWGALLCGCR…NPGCSWIEIK (76 aa)). The type E(+) motif stretch occupies residues 746-776 (GRVNIFVAGDSSNPETENIEAFLRKVRARMI). Residues 777-871 (EEGYSPLTKY…DGHCSCRGFW (95 aa)) are type DYW motif.

This sequence belongs to the PPR family. PCMP-H subfamily. Zn(2+) serves as cofactor. Weakly expressed in leaves.

Its subcellular location is the plastid. The protein resides in the chloroplast. Functionally, plays a major role in single RNA editing events in chloroplasts. Acts as a site-recognition transacting factor involved in the edition of the unique site (corresponding to cytidine-488) of rpoC1, which is a plastid-encoded subunit of the chloroplast DNA-directed RNA polymerase. May provide the catalytic activity for editing site conversion. Involved in leaf vasculature patterning. The chain is Pentatricopeptide repeat-containing protein DOT4, chloroplastic from Arabidopsis thaliana (Mouse-ear cress).